The chain runs to 201 residues: MASRSAGTLLTEFNAAYVPPGLMPGYKGHVPGVAFSFGSPYGTTTLKYFQDQRNAALGRSSTAFSRGGHFPTIFSLNPTQVLRNRALTRDRWLHTPSYTRFNLDSSRWAELLHFYQMAQRHREHYQDKTGLVHRVPYFVLPVKEWDRYPIPTDLPPLSPKEKWHLLRVAPENLRTYQTFPSGKRVSPQERQRRDCYFEFRA.

Belongs to the CIMIP2 family. In terms of assembly, microtubule inner protein component of sperm flagellar doublet microtubules.

It is found in the cytoplasm. The protein localises to the cytoskeleton. Its subcellular location is the cilium axoneme. The protein resides in the flagellum axoneme. In terms of biological role, microtubule inner protein (MIP) part of the dynein-decorated doublet microtubules (DMTs) in cilia axoneme, which is required for motile cilia beating. Binds to the intra-tubulin interfaces. In Bos taurus (Bovine), this protein is Ciliary microtubule inner protein 2C (CIMIP2C).